Consider the following 286-residue polypeptide: Beta-lactamase SHV-2 (286 aa).

An N-terminal signal peptide occupies residues 1-21 (MRYIRLCIISLLATLPLAVHA). Serine 66 acts as the Acyl-ester intermediate in catalysis. Cysteine 73 and cysteine 119 are oxidised to a cystine. Catalysis depends on glutamate 164, which acts as the Proton acceptor. 230 to 232 (KTG) is a binding site for substrate.

Belongs to the class-A beta-lactamase family.

The enzyme catalyses a beta-lactam + H2O = a substituted beta-amino acid. Functionally, this enzyme hydrolyzes cefotaxime, ceftazidime and other broad spectrum cephalosporins. The protein is Beta-lactamase SHV-2 (bla) of Escherichia coli.